Consider the following 250-residue polypeptide: Pyrroloquinoline-quinone synthase (250 aa).

This sequence belongs to the PqqC family.

It carries out the reaction 6-(2-amino-2-carboxyethyl)-7,8-dioxo-1,2,3,4,7,8-hexahydroquinoline-2,4-dicarboxylate + 3 O2 = pyrroloquinoline quinone + 2 H2O2 + 2 H2O + H(+). It participates in cofactor biosynthesis; pyrroloquinoline quinone biosynthesis. Ring cyclization and eight-electron oxidation of 3a-(2-amino-2-carboxyethyl)-4,5-dioxo-4,5,6,7,8,9-hexahydroquinoline-7,9-dicarboxylic-acid to PQQ. The chain is Pyrroloquinoline-quinone synthase from Xanthomonas oryzae pv. oryzae (strain KACC10331 / KXO85).